The chain runs to 313 residues: Pantothenate synthetase (313 aa).

An ATP-binding site is contributed by 43 to 50 (MGALHEGH). H50 acts as the Proton donor in catalysis. Q75 lines the (R)-pantoate pocket. A beta-alanine-binding site is contributed by Q75. Residue 161 to 164 (GEKD) participates in ATP binding. Position 167 (Q167) interacts with (R)-pantoate. ATP is bound by residues V190 and 198–201 (LSSR).

Belongs to the pantothenate synthetase family. In terms of assembly, homodimer.

It is found in the cytoplasm. The enzyme catalyses (R)-pantoate + beta-alanine + ATP = (R)-pantothenate + AMP + diphosphate + H(+). Its pathway is cofactor biosynthesis; (R)-pantothenate biosynthesis; (R)-pantothenate from (R)-pantoate and beta-alanine: step 1/1. Its function is as follows. Catalyzes the condensation of pantoate with beta-alanine in an ATP-dependent reaction via a pantoyl-adenylate intermediate. The chain is Pantothenate synthetase from Mycobacterium sp. (strain JLS).